A 469-amino-acid polypeptide reads, in one-letter code: 3-isopropylmalate dehydratase large subunit (469 aa).

[4Fe-4S] cluster-binding residues include Cys-347, Cys-410, and Cys-413.

This sequence belongs to the aconitase/IPM isomerase family. LeuC type 1 subfamily. In terms of assembly, heterodimer of LeuC and LeuD. [4Fe-4S] cluster is required as a cofactor.

It carries out the reaction (2R,3S)-3-isopropylmalate = (2S)-2-isopropylmalate. It functions in the pathway amino-acid biosynthesis; L-leucine biosynthesis; L-leucine from 3-methyl-2-oxobutanoate: step 2/4. Functionally, catalyzes the isomerization between 2-isopropylmalate and 3-isopropylmalate, via the formation of 2-isopropylmaleate. The sequence is that of 3-isopropylmalate dehydratase large subunit from Cupriavidus pinatubonensis (strain JMP 134 / LMG 1197) (Cupriavidus necator (strain JMP 134)).